The sequence spans 591 residues: Aspartate--tRNA(Asp/Asn) ligase (591 aa).

Glutamate 175 contacts L-aspartate. Positions 199 to 202 are aspartate; it reads QQFK. L-aspartate contacts are provided by arginine 221 and histidine 453. 221-223 lines the ATP pocket; that stretch reads RDE. Glutamate 486 serves as a coordination point for ATP. Residue arginine 493 coordinates L-aspartate. ATP is bound at residue 538 to 541; it reads GIDR.

The protein belongs to the class-II aminoacyl-tRNA synthetase family. Type 1 subfamily. As to quaternary structure, homodimer.

It is found in the cytoplasm. The enzyme catalyses tRNA(Asx) + L-aspartate + ATP = L-aspartyl-tRNA(Asx) + AMP + diphosphate. Aspartyl-tRNA synthetase with relaxed tRNA specificity since it is able to aspartylate not only its cognate tRNA(Asp) but also tRNA(Asn). Reaction proceeds in two steps: L-aspartate is first activated by ATP to form Asp-AMP and then transferred to the acceptor end of tRNA(Asp/Asn). The polypeptide is Aspartate--tRNA(Asp/Asn) ligase (Paracoccus denitrificans (strain Pd 1222)).